Here is a 299-residue protein sequence, read N- to C-terminus: DNA-binding transcriptional activator HetR (299 aa).

Ser-152 is an active-site residue.

The protein belongs to the peptidase S48 family. As to quaternary structure, homodimer; disulfide-linked.

Functionally, might be involved in temporal and/or spatial regulation of nitrogen fixation. Dimerization is required for DNA-binding. Has both a protease and a DNA-binding activity. This is DNA-binding transcriptional activator HetR from Leptolyngbya boryana (Plectonema boryanum).